A 281-amino-acid chain; its full sequence is MKYIGAHVSAAGGVENTIARAQAIGANAFALFTKNQRQWQAAPLSEASIRAFKLACEKAGFRPEQILPHDSYLINLGHPDPDGLAKSRDAFLDEIKRCEQLGLCYLNFHPGSHLKQIPEAASLTLVSESINWALERSQGVTAVIENTAGQGTNLGWSFEHLATLIDGVEDKSRVGICFDTCHAFAAGYDLRTPESCAQVFADFDRIVGFQYLKGMHINGAKCTFGSRVDRHHSLREGNLGEAVFHHIMNDDRFDGIPLVLETIDETIWGDEISWLRSLAKA.

The Zn(2+) site is built by H69, H109, E145, D179, H182, H216, D229, H231, and E261.

It belongs to the AP endonuclease 2 family. The cofactor is Zn(2+).

It carries out the reaction Endonucleolytic cleavage to 5'-phosphooligonucleotide end-products.. Its function is as follows. Endonuclease IV plays a role in DNA repair. It cleaves phosphodiester bonds at apurinic or apyrimidinic (AP) sites, generating a 3'-hydroxyl group and a 5'-terminal sugar phosphate. The polypeptide is Probable endonuclease 4 (Aeromonas salmonicida (strain A449)).